The following is a 144-amino-acid chain: Protein D (144 aa).

This chain is Protein D (D), found in Escherichia coli.